The chain runs to 68 residues: Large ribosomal subunit protein bL32 (68 aa).

This sequence belongs to the bacterial ribosomal protein bL32 family.

The sequence is that of Large ribosomal subunit protein bL32 from Aster yellows witches'-broom phytoplasma (strain AYWB).